Here is a 473-residue protein sequence, read N- to C-terminus: MSELSTYKGYSPKHGDKVPVLQNLNDLTPKDFYDKFIATRTPVIIKSSLPESDWKGYLWQQQDYLLSKIGDIVCKVEPIDPVSGTFGQGMSRNEMSIKEFFQKLKNGERLYLTTQYDESNEVLDGDDEVSLLVKSLCPHPTDGLLTDFSITPALMGNLVPQQCNLWIGKSENGTSSGLHHDFHDNIYAVISGYKRFVIISPDHANQLKLSGKISKIHPNGLISYEGEDCPQRSDGLTELDAAIAKTQFLEKKIGSLKELAVPQESIELLEAEYENEMDRVLQMQIGGPEEDWNDLEEGDAASLLDGSVGGDPESDILLNEGNDIEATSLQDTKPELPDHFTKVSVNGLHKFMGFDDAKNVDVDKDELSALAGTVPLVVDLEPGDMLYLPASWFHEVTSSSASSGGSDVHIAFNYWFHPPDNLEDFDHPYLDRNIWQAKRHLVGEAIDQLYATNKKNEKRPAEDDSPSQKKTCQ.

In terms of domain architecture, JmjC spans 140-433 (PTDGLLTDFS…DFDHPYLDRN (294 aa)). The interval 452-473 (TNKKNEKRPAEDDSPSQKKTCQ) is disordered.

It is found in the nucleus. In terms of biological role, has a role in meiosis. The chain is JmjC domain-containing protein 4 (jmj4) from Schizosaccharomyces pombe (strain 972 / ATCC 24843) (Fission yeast).